The chain runs to 295 residues: Shikimate dehydrogenase (NADP(+)) (295 aa).

Residues 22–24 and Ser69 contribute to the shikimate site; that span reads SLS. Lys73 serves as the catalytic Proton acceptor. Shikimate is bound by residues Asn94 and Asp111. NADP(+)-binding positions include 135–139 and Val236; that span reads GAGGA. A shikimate-binding site is contributed by Tyr238. NADP(+) is bound at residue Gly260.

Belongs to the shikimate dehydrogenase family. Homodimer.

It carries out the reaction shikimate + NADP(+) = 3-dehydroshikimate + NADPH + H(+). It participates in metabolic intermediate biosynthesis; chorismate biosynthesis; chorismate from D-erythrose 4-phosphate and phosphoenolpyruvate: step 4/7. In terms of biological role, involved in the biosynthesis of the chorismate, which leads to the biosynthesis of aromatic amino acids. Catalyzes the reversible NADPH linked reduction of 3-dehydroshikimate (DHSA) to yield shikimate (SA). This Streptococcus uberis (strain ATCC BAA-854 / 0140J) protein is Shikimate dehydrogenase (NADP(+)).